The sequence spans 572 residues: Light-independent protochlorophyllide reductase subunit N (572 aa).

Positions 106, 131, and 191 each coordinate [4Fe-4S] cluster. Positions 249–268 (SLDSMKLPSGGREKQINDVN) are disordered.

The protein belongs to the BchN/ChlN family. In terms of assembly, protochlorophyllide reductase is composed of three subunits; ChlL, ChlN and ChlB. Forms a heterotetramer of two ChlB and two ChlN subunits. The cofactor is [4Fe-4S] cluster.

The protein localises to the plastid. Its subcellular location is the chloroplast. It catalyses the reaction chlorophyllide a + oxidized 2[4Fe-4S]-[ferredoxin] + 2 ADP + 2 phosphate = protochlorophyllide a + reduced 2[4Fe-4S]-[ferredoxin] + 2 ATP + 2 H2O. Its pathway is porphyrin-containing compound metabolism; chlorophyll biosynthesis (light-independent). Functionally, component of the dark-operative protochlorophyllide reductase (DPOR) that uses Mg-ATP and reduced ferredoxin to reduce ring D of protochlorophyllide (Pchlide) to form chlorophyllide a (Chlide). This reaction is light-independent. The NB-protein (ChlN-ChlB) is the catalytic component of the complex. The chain is Light-independent protochlorophyllide reductase subunit N from Oltmannsiellopsis viridis (Marine flagellate).